Consider the following 337-residue polypeptide: Ketol-acid reductoisomerase (NADP(+)) (337 aa).

A KARI N-terminal Rossmann domain is found at 3–183; that stretch reads VEMFYDADAD…GGARAGVIKT (181 aa). NADP(+) contacts are provided by residues 26–29, Lys49, Ser52, Ser54, and 84–87; these read YGSQ and DTAQ. The active site involves His109. Position 135 (Gly135) interacts with NADP(+). A KARI C-terminal knotted domain is found at 184–329; sequence TFKDETETDL…KKLRDLMSWV (146 aa). Mg(2+) contacts are provided by Asp192, Glu196, Glu228, and Glu232. Ser253 contacts substrate.

This sequence belongs to the ketol-acid reductoisomerase family. It depends on Mg(2+) as a cofactor.

The enzyme catalyses (2R)-2,3-dihydroxy-3-methylbutanoate + NADP(+) = (2S)-2-acetolactate + NADPH + H(+). The catalysed reaction is (2R,3R)-2,3-dihydroxy-3-methylpentanoate + NADP(+) = (S)-2-ethyl-2-hydroxy-3-oxobutanoate + NADPH + H(+). It participates in amino-acid biosynthesis; L-isoleucine biosynthesis; L-isoleucine from 2-oxobutanoate: step 2/4. Its pathway is amino-acid biosynthesis; L-valine biosynthesis; L-valine from pyruvate: step 2/4. In terms of biological role, involved in the biosynthesis of branched-chain amino acids (BCAA). Catalyzes an alkyl-migration followed by a ketol-acid reduction of (S)-2-acetolactate (S2AL) to yield (R)-2,3-dihydroxy-isovalerate. In the isomerase reaction, S2AL is rearranged via a Mg-dependent methyl migration to produce 3-hydroxy-3-methyl-2-ketobutyrate (HMKB). In the reductase reaction, this 2-ketoacid undergoes a metal-dependent reduction by NADPH to yield (R)-2,3-dihydroxy-isovalerate. The protein is Ketol-acid reductoisomerase (NADP(+)) of Mycolicibacterium gilvum (strain PYR-GCK) (Mycobacterium gilvum (strain PYR-GCK)).